The following is a 332-amino-acid chain: Ribosomal RNA-processing protein 8 (332 aa).

A disordered region spans residues 1–109 (MGKKRINEVS…EVEKKNEEGD (109 aa)). 2 stretches are compositionally biased toward basic residues: residues 38 to 53 (KKKK…KLAA) and 82 to 94 (KKKK…KKKY). Positions 95-109 (KPEAAEVEKKNEEGD) are enriched in basic and acidic residues. The S-adenosyl-L-methionine site is built by histidine 158, glycine 193, aspartate 213, aspartate 225, methionine 226, and cysteine 242.

The protein belongs to the methyltransferase superfamily. RRP8 family.

It localises to the nucleus. Its subcellular location is the nucleolus. Functionally, probable methyltransferase required to silence rDNA. The chain is Ribosomal RNA-processing protein 8 (rrp-8) from Caenorhabditis briggsae.